Reading from the N-terminus, the 310-residue chain is Low affinity immunoglobulin gamma Fc region receptor II-b (310 aa).

The signal sequence occupies residues Met-1 to Gly-42. Residues Thr-43–Pro-217 lie on the Extracellular side of the membrane. 2 Ig-like C2-type domains span residues Pro-48–Thr-127 and Glu-131–Thr-213. Intrachain disulfides connect Cys-71/Cys-113 and Cys-152/Cys-196. 3 N-linked (GlcNAc...) asparagine glycosylation sites follow: Asn-106, Asn-180, and Asn-187. Residues Ser-218 to Ala-240 traverse the membrane as a helical segment. Residues Val-241–Ile-310 are Cytoplasmic-facing. The short motif at Ile-290–Leu-295 is the ITIM motif element. A Phosphotyrosine; by SRC-type Tyr-kinases modification is found at Tyr-292.

As to quaternary structure, interacts with INPP5D/SHIP1. Interacts with FGR. Interacts with LYN. (Microbial infection) Isoform IIB1 interacts with measles virus protein N. Protein N is released in the blood following lysis of measles infected cells. This interaction presumably block inflammatory immune response. Post-translationally, phosphorylated by the SRC-type Tyr-kinases LYN and BLK. Is the most broadly distributed Fc-gamma-receptor. Expressed in monocyte, neutrophils, macrophages, basophils, eosinophils, Langerhans cells, B-cells, platelets cells and placenta (endothelial cells). Not detected in natural killer cells.

It is found in the cell membrane. Functionally, receptor for the Fc region of complexed or aggregated immunoglobulins gamma. Low affinity receptor. Involved in a variety of effector and regulatory functions such as phagocytosis of immune complexes and modulation of antibody production by B-cells. Binding to this receptor results in down-modulation of previous state of cell activation triggered via antigen receptors on B-cells (BCR), T-cells (TCR) or via another Fc receptor. Isoform IIB1 fails to mediate endocytosis or phagocytosis. Isoform IIB2 does not trigger phagocytosis. The chain is Low affinity immunoglobulin gamma Fc region receptor II-b (FCGR2B) from Homo sapiens (Human).